Here is a 363-residue protein sequence, read N- to C-terminus: 3-isopropylmalate dehydrogenase (363 aa).

Residue 78-91 coordinates NAD(+); the sequence is GPKWENLPPESQPE. Arg99, Arg109, Arg138, and Asp227 together coordinate substrate. Asp227, Asp251, and Asp255 together coordinate Mg(2+). Residue 285–297 participates in NAD(+) binding; the sequence is GSAPDIAGKNIAN.

This sequence belongs to the isocitrate and isopropylmalate dehydrogenases family. LeuB type 1 subfamily. In terms of assembly, homodimer. Mg(2+) serves as cofactor. Requires Mn(2+) as cofactor.

It is found in the cytoplasm. It catalyses the reaction (2R,3S)-3-isopropylmalate + NAD(+) = 4-methyl-2-oxopentanoate + CO2 + NADH. It functions in the pathway amino-acid biosynthesis; L-leucine biosynthesis; L-leucine from 3-methyl-2-oxobutanoate: step 3/4. In terms of biological role, catalyzes the oxidation of 3-carboxy-2-hydroxy-4-methylpentanoate (3-isopropylmalate) to 3-carboxy-4-methyl-2-oxopentanoate. The product decarboxylates to 4-methyl-2 oxopentanoate. The protein is 3-isopropylmalate dehydrogenase of Salmonella paratyphi A (strain ATCC 9150 / SARB42).